The chain runs to 327 residues: MTKVEAIHKVSVVIPVYNEQESLPELIRRTTAACELLGKDYEILLVDDGSSDESASMLSDAAEEPGSHIVAVLLNRNYGQHNAIMAGFSHVTGDLIVTLDADLQNPPEEIPRLVAKADEGYDVVGTVRQNRQDTWFRKRASRLINRLIQSTTGKAMGDYGCMLRAYRRHIIDAMLHCHERSTFIPILANTFARKAIEIPVHHAEREFGESKYSFMRLINLMYDLVTCLTTTPLRMLSVFGSIIAVLGFTLSVLLVVLRIAFGPQWAADGVFMLFAVLFMFIGAQFVAMGLLGEYIGRIYTDVRARPRYFIQRVVSRGSVSTSKENQQ.

The next 2 membrane-spanning stretches (helical) occupy residues 236 to 256 (LSVFGSIIAVLGFTLSVLLVV) and 270 to 290 (VFMLFAVLFMFIGAQFVAMGL).

It belongs to the glycosyltransferase 2 family.

It localises to the cell inner membrane. It carries out the reaction UDP-4-deoxy-4-formamido-beta-L-arabinose + di-trans,octa-cis-undecaprenyl phosphate = 4-deoxy-4-formamido-alpha-L-arabinopyranosyl di-trans,octa-cis-undecaprenyl phosphate + UDP. It participates in glycolipid biosynthesis; 4-amino-4-deoxy-alpha-L-arabinose undecaprenyl phosphate biosynthesis; 4-amino-4-deoxy-alpha-L-arabinose undecaprenyl phosphate from UDP-4-deoxy-4-formamido-beta-L-arabinose and undecaprenyl phosphate: step 1/2. It functions in the pathway bacterial outer membrane biogenesis; lipopolysaccharide biosynthesis. In terms of biological role, catalyzes the transfer of 4-deoxy-4-formamido-L-arabinose from UDP to undecaprenyl phosphate. The modified arabinose is attached to lipid A and is required for resistance to polymyxin and cationic antimicrobial peptides. This Enterobacter sp. (strain 638) protein is Undecaprenyl-phosphate 4-deoxy-4-formamido-L-arabinose transferase.